Here is a 285-residue protein sequence, read N- to C-terminus: Phosphoribosylaminoimidazole-succinocarboxamide synthase (285 aa).

Belongs to the SAICAR synthetase family.

The enzyme catalyses 5-amino-1-(5-phospho-D-ribosyl)imidazole-4-carboxylate + L-aspartate + ATP = (2S)-2-[5-amino-1-(5-phospho-beta-D-ribosyl)imidazole-4-carboxamido]succinate + ADP + phosphate + 2 H(+). It functions in the pathway purine metabolism; IMP biosynthesis via de novo pathway; 5-amino-1-(5-phospho-D-ribosyl)imidazole-4-carboxamide from 5-amino-1-(5-phospho-D-ribosyl)imidazole-4-carboxylate: step 1/2. The chain is Phosphoribosylaminoimidazole-succinocarboxamide synthase from Leptospira interrogans serogroup Icterohaemorrhagiae serovar copenhageni (strain Fiocruz L1-130).